We begin with the raw amino-acid sequence, 266 residues long: Large ribosomal subunit protein eL8 (266 aa).

Glycyl lysine isopeptide (Lys-Gly) (interchain with G-Cter in SUMO2) cross-links involve residues Lys11, Lys20, and Lys21. Lys34 carries the N6-acetyllysine modification. Lys48 is covalently cross-linked (Glycyl lysine isopeptide (Lys-Gly) (interchain with G-Cter in SUMO2)). Lys97 is subject to N6-acetyllysine; alternate. A Glycyl lysine isopeptide (Lys-Gly) (interchain with G-Cter in SUMO2); alternate cross-link involves residue Lys97. Residue Lys125 forms a Glycyl lysine isopeptide (Lys-Gly) (interchain with G-Cter in SUMO2) linkage. The residue at position 217 (Lys217) is an N6-acetyllysine. Lys245 participates in a covalent cross-link: Glycyl lysine isopeptide (Lys-Gly) (interchain with G-Cter in SUMO2).

This sequence belongs to the eukaryotic ribosomal protein eL8 family. Component of the large ribosomal subunit. Interacts with CRY1. Interacts with DICER1, AGO2, TARBP2, MOV10 and EIF6; they form a large RNA-induced silencing complex (RISC).

It is found in the cytoplasm. In terms of biological role, component of the large ribosomal subunit. The ribosome is a large ribonucleoprotein complex responsible for the synthesis of proteins in the cell. In Mus musculus (Mouse), this protein is Large ribosomal subunit protein eL8 (Rpl7a).